A 144-amino-acid polypeptide reads, in one-letter code: Flagellar assembly factor FliW (144 aa).

Belongs to the FliW family. As to quaternary structure, interacts with translational regulator CsrA and flagellin(s).

It localises to the cytoplasm. Acts as an anti-CsrA protein, binds CsrA and prevents it from repressing translation of its target genes, one of which is flagellin. Binds to flagellin and participates in the assembly of the flagellum. The protein is Flagellar assembly factor FliW of Geobacillus kaustophilus (strain HTA426).